A 168-amino-acid polypeptide reads, in one-letter code: uncharacterized protein (168 aa).

Disordered stretches follow at residues 37–74 (GGSK…SQFT), 81–100 (QYNY…PNYY), and 117–168 (MQPF…EETN). Composition is skewed to polar residues over residues 52–74 (HSGQ…SQFT) and 82–95 (YNYN…TRSV). The span at 120 to 129 (FNNQSFNNQS) shows a compositional bias: low complexity. Positions 130 to 158 (RTHQSKTYQHNQQKRSFNGPRNNGPQNNV) are enriched in polar residues.

This is an uncharacterized protein from Acanthamoeba polyphaga (Amoeba).